Consider the following 369-residue polypeptide: Delta(12)-oleate desaturase (369 aa).

The next 2 membrane-spanning stretches (helical) occupy residues 41-61 (LLSDLAFVSLFFYLAIAYFPL) and 69-89 (IAWPLYWIFQGCSLTGVWVIA). The short motif at 90–94 (HECGH) is the Histidine box-1 element. The chain crosses the membrane as a helical span at residues 102–122 (LIDDIVGLFFHSALLVPYFSW). Residues 126–130 (HRRHH) carry the Histidine box-2 motif. The next 3 membrane-spanning stretches (helical) occupy residues 164 to 184 (LISLIGTLTLGWPLYLAFNMS), 207 to 227 (WIQVYISDAGILGMAFMLYRI), and 234 to 254 (FWVMRIYGIPLVIVNGFLVLI). The Histidine box-3 signature appears at 300 to 304 (HVVHH).

This sequence belongs to the fatty acid desaturase type 1 family.

The protein resides in the membrane. It participates in lipid metabolism; polyunsaturated fatty acid biosynthesis. In terms of biological role, delta(12)-fatty acid desaturase producing in a heterologous system linoleic acid (18:2(9Z,12Z)) and to a lower extent hexadecadienoic acid (16:2(9Z,12Z)). The protein is Delta(12)-oleate desaturase of Trichosanthes kirilowii (Chinese snake gourd).